Reading from the N-terminus, the 256-residue chain is Deoxyribose-phosphate aldolase (256 aa).

D102 acts as the Proton donor/acceptor in catalysis. Residue K165 is the Schiff-base intermediate with acetaldehyde of the active site. K197 functions as the Proton donor/acceptor in the catalytic mechanism.

Belongs to the DeoC/FbaB aldolase family. DeoC type 2 subfamily.

The protein localises to the cytoplasm. The enzyme catalyses 2-deoxy-D-ribose 5-phosphate = D-glyceraldehyde 3-phosphate + acetaldehyde. Its pathway is carbohydrate degradation; 2-deoxy-D-ribose 1-phosphate degradation; D-glyceraldehyde 3-phosphate and acetaldehyde from 2-deoxy-alpha-D-ribose 1-phosphate: step 2/2. In terms of biological role, catalyzes a reversible aldol reaction between acetaldehyde and D-glyceraldehyde 3-phosphate to generate 2-deoxy-D-ribose 5-phosphate. The protein is Deoxyribose-phosphate aldolase of Shewanella sp. (strain W3-18-1).